The chain runs to 474 residues: tRNA-2-methylthio-N(6)-dimethylallyladenosine synthase (474 aa).

Residues Lys3–Gly120 enclose the MTTase N-terminal domain. The [4Fe-4S] cluster site is built by Cys12, Cys49, Cys83, Cys157, Cys161, and Cys164. The 233-residue stretch at Arg143–Gln375 folds into the Radical SAM core domain. Residues Arg378 to Arg441 form the TRAM domain.

Belongs to the methylthiotransferase family. MiaB subfamily. In terms of assembly, monomer. [4Fe-4S] cluster is required as a cofactor.

The protein localises to the cytoplasm. The catalysed reaction is N(6)-dimethylallyladenosine(37) in tRNA + (sulfur carrier)-SH + AH2 + 2 S-adenosyl-L-methionine = 2-methylsulfanyl-N(6)-dimethylallyladenosine(37) in tRNA + (sulfur carrier)-H + 5'-deoxyadenosine + L-methionine + A + S-adenosyl-L-homocysteine + 2 H(+). Functionally, catalyzes the methylthiolation of N6-(dimethylallyl)adenosine (i(6)A), leading to the formation of 2-methylthio-N6-(dimethylallyl)adenosine (ms(2)i(6)A) at position 37 in tRNAs that read codons beginning with uridine. This chain is tRNA-2-methylthio-N(6)-dimethylallyladenosine synthase, found in Serratia proteamaculans (strain 568).